The sequence spans 1000 residues: Kinesin-like protein CIN8 (1000 aa).

The segment covering 1–26 has biased composition (polar residues); it reads MPAENQNTGQDRSSNSISKNGNSQVG. Positions 1–28 are disordered; it reads MPAENQNTGQDRSSNSISKNGNSQVGCH. The region spanning 36-477 is the Kinesin motor domain; that stretch reads NITVAVRCRG…LEYASKAKNI (442 aa). 128–135 contacts ATP; that stretch reads GMTSTGKT. A compositionally biased stretch (low complexity) spans 220-242; sequence ANNTTSNSASSSRSNSRNSSPRS. Disordered stretches follow at residues 220-248 and 260-312; these read ANNT…DLTP and KSLP…PNDQ. Polar residues predominate over residues 261–276; sequence SLPNTIKQQYQQQQAV. The span at 277–301 shows a compositional bias: low complexity; the sequence is NSRNNSSSNSGSTTNNASSNTNTNN. Residues 302–312 show a composition bias toward polar residues; the sequence is GQRSSMAPNDQ. Coiled coils occupy residues 518 to 615 and 860 to 904; these read MSQD…MALH and ISVM…IKNS. Residues 970–1000 are disordered; sequence VISPKKHAIEDENKSSENVDNEGSRKMLKIE. Phosphoserine is present on Ser972. The segment covering 976 to 1000 has biased composition (basic and acidic residues); that stretch reads HAIEDENKSSENVDNEGSRKMLKIE.

It belongs to the TRAFAC class myosin-kinesin ATPase superfamily. Kinesin family. BimC subfamily.

Its subcellular location is the cytoplasm. It is found in the cytoskeleton. It localises to the spindle. The protein localises to the mitochondrion. In terms of biological role, elongates the mitotic spindle by interacting with spindle microtubules to generate an outward force pushing spindle poles apart. Following spindle assembly, CIN8 and KIP1 apparently act to oppose a force, possibly generated by KAR3, that draws separated poles back together. This Saccharomyces cerevisiae (strain ATCC 204508 / S288c) (Baker's yeast) protein is Kinesin-like protein CIN8 (CIN8).